The sequence spans 449 residues: Flavonol 7-O-beta-glucosyltransferase UGT74F1 (449 aa).

Histidine 18 acts as the Proton acceptor in catalysis. Residue histidine 18 coordinates an anthocyanidin. The active-site Charge relay is aspartate 111. Threonine 133, glutamine 327, histidine 342, tryptophan 345, asparagine 346, serine 347, glutamate 350, aspartate 366, and glutamine 367 together coordinate UDP-alpha-D-glucose.

Belongs to the UDP-glycosyltransferase family.

The enzyme catalyses a 7-O-hydroxy-flavonol + UDP-alpha-D-glucose = a flavonol 7-O-beta-D-glucoside + UDP + H(+). Functionally, possesses quercetin 7-O-glucosyltransferase and 4'-O-glucosyltransferase activities in vitro. Also active in vitro on benzoates and benzoate derivatives. Has low affinity for the tryptophan precursor anthranilate. Catalyzes the formation of anthranilate glucose ester. Is a minor source of this activity in the plant. This Arabidopsis thaliana (Mouse-ear cress) protein is Flavonol 7-O-beta-glucosyltransferase UGT74F1.